Consider the following 564-residue polypeptide: Dihydroxy-acid dehydratase (564 aa).

C51 contacts [2Fe-2S] cluster. D83 is a Mg(2+) binding site. Residue C124 coordinates [2Fe-2S] cluster. Mg(2+) contacts are provided by D125 and K126. K126 carries the post-translational modification N6-carboxylysine. C196 is a binding site for [2Fe-2S] cluster. E448 serves as a coordination point for Mg(2+). The active-site Proton acceptor is S474.

Belongs to the IlvD/Edd family. Homodimer. Requires [2Fe-2S] cluster as cofactor. Mg(2+) is required as a cofactor.

The catalysed reaction is (2R)-2,3-dihydroxy-3-methylbutanoate = 3-methyl-2-oxobutanoate + H2O. It carries out the reaction (2R,3R)-2,3-dihydroxy-3-methylpentanoate = (S)-3-methyl-2-oxopentanoate + H2O. Its pathway is amino-acid biosynthesis; L-isoleucine biosynthesis; L-isoleucine from 2-oxobutanoate: step 3/4. It functions in the pathway amino-acid biosynthesis; L-valine biosynthesis; L-valine from pyruvate: step 3/4. Its function is as follows. Functions in the biosynthesis of branched-chain amino acids. Catalyzes the dehydration of (2R,3R)-2,3-dihydroxy-3-methylpentanoate (2,3-dihydroxy-3-methylvalerate) into 2-oxo-3-methylpentanoate (2-oxo-3-methylvalerate) and of (2R)-2,3-dihydroxy-3-methylbutanoate (2,3-dihydroxyisovalerate) into 2-oxo-3-methylbutanoate (2-oxoisovalerate), the penultimate precursor to L-isoleucine and L-valine, respectively. The sequence is that of Dihydroxy-acid dehydratase from Polynucleobacter asymbioticus (strain DSM 18221 / CIP 109841 / QLW-P1DMWA-1) (Polynucleobacter necessarius subsp. asymbioticus).